Here is a 323-residue protein sequence, read N- to C-terminus: Coiled-coil domain-containing protein 160 (323 aa).

Residues 143–290 adopt a coiled-coil conformation; that stretch reads SKLRLNLLNE…IKNELRTEKS (148 aa).

This sequence belongs to the CCDC160 family.

This Bos taurus (Bovine) protein is Coiled-coil domain-containing protein 160 (CCDC160).